Consider the following 186-residue polypeptide: uncharacterized protein (186 aa).

CBS domains follow at residues Ile-10–Pro-69 and Ile-77–Thr-133.

This is an uncharacterized protein from Methanocaldococcus jannaschii (strain ATCC 43067 / DSM 2661 / JAL-1 / JCM 10045 / NBRC 100440) (Methanococcus jannaschii).